A 150-amino-acid chain; its full sequence is MLKEFREFVLRGNVADMAVGIIIGGAFGAIVNTLVSDVLMPPLGLLIGGIDFSNFYLVLKEGSAPGPYAALADAKAVGAVTVNYGIFLNALISFMIMAFAVFMLIKSLTSMRGKPEPPAPAPAVKECPYCCSTIPLKASRCPECTSQLEK.

2 helical membrane passes run 19–39 (VGII…SDVL) and 85–105 (GIFL…FMLI).

This sequence belongs to the MscL family. In terms of assembly, homopentamer.

Its subcellular location is the cell inner membrane. Channel that opens in response to stretch forces in the membrane lipid bilayer. May participate in the regulation of osmotic pressure changes within the cell. This chain is Large-conductance mechanosensitive channel, found in Chlorobium limicola (strain DSM 245 / NBRC 103803 / 6330).